Consider the following 408-residue polypeptide: MSAIPNASNTSASTSFDAHRPLTLADINDPSTKHVIVGMSGGVDSSVSAVLLQQAGFMVEGLFMKNWEEDDGTEYCTAMDDLADAQAVCDKIGIKLHTANFAMEYWDRVFEHFLAEYKAGRTPNPDILCNKEIKFKAFLDYALTLGADYIATGHYTRRSVNYKNNDGIEVAQLLRGLDNNKDQSYFLHAVGGDKLAKTLFPVGELKKPVVRQIAEEHDLITANKKDSTGICFIGERRFKDFLQQYLPAQKGDIVTDDGITIGTHDGLMYYTLGQRGGIGIGGVKDRPEEPWFVLAKDLDNNRLIVGQGHEHAMMLSNELQAYKLDWVDVLPPADIFSEDGLRCMAKSRYRQPDQACTVFANNENGSEVRVVFDEPQRAVTPGQSAVFYIDEVCLGGGVIASIDAPCGI.

Residues 38–45 (GMSGGVDS) and M64 contribute to the ATP site. The tract at residues 124–126 (NPD) is interaction with target base in tRNA. The Nucleophile role is filled by C129. A disulfide bond links C129 and C231. G153 is an ATP binding site. The interaction with tRNA stretch occupies residues 181-183 (KDQ). C231 acts as the Cysteine persulfide intermediate in catalysis. The tract at residues 348–349 (RY) is interaction with tRNA.

It belongs to the MnmA/TRMU family.

Its subcellular location is the cytoplasm. The catalysed reaction is S-sulfanyl-L-cysteinyl-[protein] + uridine(34) in tRNA + AH2 + ATP = 2-thiouridine(34) in tRNA + L-cysteinyl-[protein] + A + AMP + diphosphate + H(+). Functionally, catalyzes the 2-thiolation of uridine at the wobble position (U34) of tRNA, leading to the formation of s(2)U34. The polypeptide is tRNA-specific 2-thiouridylase MnmA (Psychrobacter cryohalolentis (strain ATCC BAA-1226 / DSM 17306 / VKM B-2378 / K5)).